We begin with the raw amino-acid sequence, 313 residues long: Ketimine reductase mu-crystallin (313 aa).

R47 is a 3,3',5-triiodo-L-thyronine binding site. S90, H91, R118, A143, V145, Q146, N167, R168, T169, N172, T204, M205, and V225 together coordinate NADPH. Residue E256 coordinates 3,3',5-triiodo-L-thyronine. Residue S291 participates in NADPH binding.

This sequence belongs to the ornithine cyclodeaminase/mu-crystallin family. In terms of assembly, homodimer. Binds the thyroid hormone triiodothyronine (T3); T3 binding inhibits enzymatic activity.

It is found in the cytoplasm. It carries out the reaction L-pipecolate + NADP(+) = Delta(1)-piperideine-2-carboxylate + NADPH + H(+). The catalysed reaction is L-pipecolate + NAD(+) = Delta(1)-piperideine-2-carboxylate + NADH + H(+). It catalyses the reaction L-proline + NADP(+) = 1-pyrroline-2-carboxylate + NADPH + H(+). The enzyme catalyses L-proline + NAD(+) = 1-pyrroline-2-carboxylate + NADH + H(+). It carries out the reaction (3R)-1,4-thiomorpholine-3-carboxylate + NAD(+) = 3,4-dehydrothiomorpholine-3-carboxylate + NADH + 2 H(+). The catalysed reaction is (3R)-1,4-thiomorpholine-3-carboxylate + NADP(+) = 3,4-dehydrothiomorpholine-3-carboxylate + NADPH + 2 H(+). It catalyses the reaction (S)-cystathionine ketimine + NADH + 2 H(+) = (3R,5S)-2,3,5,6,7-pentahydro-1,4-thiazepine-3,5-dicarboxylate + NAD(+). The enzyme catalyses (S)-cystathionine ketimine + NADPH + 2 H(+) = (3R,5S)-2,3,5,6,7-pentahydro-1,4-thiazepine-3,5-dicarboxylate + NADP(+). It carries out the reaction (R)-lanthionine ketimine + NADPH + 2 H(+) = (3R,5R)-1,4-thiomorpholine-3,5-dicarboxylate + NADP(+). The catalysed reaction is Delta(2)-thiazoline-2-carboxylate + NADPH + 2 H(+) = L-thiazolidine-2-carboxylate + NADP(+). Its function is as follows. Catalyzes the NAD(P)H-dependent reduction of imine double bonds of a number of cyclic ketimine substrates, including sulfur-containing cyclic ketimines. Under physiological conditions, it efficiently catalyzes delta(1)-piperideine-2-carboxylate (P2C) and delta(1)-pyrroline-2-carboxylate (Pyr2C) reduction, suggesting a central role in lysine and glutamate metabolism. Additional substrates are delta(2)-thiazoline-2-carboxylate (T2C), 3,4-dehydrothiomorpholine-3-carboxylate (AECK), and (R)-lanthionine ketimine (LK) that is reduced at very low rate compared to other substrates. Also catalyzes the NAD(P)H-dependent reduction of (S)-cystathionine ketimine (CysK). This Rattus norvegicus (Rat) protein is Ketimine reductase mu-crystallin.